Consider the following 127-residue polypeptide: uncharacterized protein (127 aa).

Positions 71–126 (FYLREYRRIRRRIKELKNRAKYISKGEIAYNPKIMKEVEALKEKLSEIEKKIEELK) form a coiled coil.

This is an uncharacterized protein from Aquifex aeolicus (strain VF5).